Consider the following 1590-residue polypeptide: Pentafunctional AROM polypeptide (1590 aa).

The 3-dehydroquinate synthase stretch occupies residues 1–400 (MSTANGSSPT…HEPKASSVDD (400 aa)). NAD(+)-binding positions include 49-51 (DTN), 96-99 (EGSK), 127-129 (GGV), and D132. R143 is a binding site for 7-phospho-2-dehydro-3-deoxy-D-arabino-heptonate. Position 152 to 153 (152 to 153 (TT)) interacts with NAD(+). D159 and K165 together coordinate 7-phospho-2-dehydro-3-deoxy-D-arabino-heptonate. An NAD(+)-binding site is contributed by K174. A 7-phospho-2-dehydro-3-deoxy-D-arabino-heptonate-binding site is contributed by N175. Residues 192 to 195 (FLNT) and N203 each bind NAD(+). E207 provides a ligand contact to Zn(2+). Residues 207–210 (EVIK) and K266 contribute to the 7-phospho-2-dehydro-3-deoxy-D-arabino-heptonate site. The Proton acceptor; for 3-dehydroquinate synthase activity role is filled by E276. 7-phospho-2-dehydro-3-deoxy-D-arabino-heptonate contacts are provided by residues 280-284 (RNLLN) and H287. H287 contacts Zn(2+). H291 serves as the catalytic Proton acceptor; for 3-dehydroquinate synthase activity. 7-phospho-2-dehydro-3-deoxy-D-arabino-heptonate contacts are provided by H303 and K372. H303 contributes to the Zn(2+) binding site. Residues 413 to 856 (VQPGVRPGLK…WDVLSGVFGV (444 aa)) form an EPSP synthase region. C838 (for EPSP synthase activity) is an active-site residue. Residues 876 to 1070 (NRSVFVIGMR…KAKPHSFFVS (195 aa)) are shikimate kinase. Residue 883–890 (GMRGAGKS) participates in ATP binding. The interval 1071-1285 (LTVPNITAHT…AAPGQLTAAE (215 aa)) is 3-dehydroquinase. H1187 functions as the Proton acceptor; for 3-dehydroquinate dehydratase activity in the catalytic mechanism. The Schiff-base intermediate with substrate; for 3-dehydroquinate dehydratase activity role is filled by K1215. The shikimate dehydrogenase stretch occupies residues 1298–1590 (KRKFYLFGKP…IVMNGTSDSS (293 aa)).

The protein in the N-terminal section; belongs to the sugar phosphate cyclases superfamily. Dehydroquinate synthase family. In the 2nd section; belongs to the EPSP synthase family. This sequence in the 3rd section; belongs to the shikimate kinase family. It in the 4th section; belongs to the type-I 3-dehydroquinase family. The protein in the C-terminal section; belongs to the shikimate dehydrogenase family. In terms of assembly, homodimer. Requires Zn(2+) as cofactor.

The protein resides in the cytoplasm. It carries out the reaction 7-phospho-2-dehydro-3-deoxy-D-arabino-heptonate = 3-dehydroquinate + phosphate. The catalysed reaction is 3-dehydroquinate = 3-dehydroshikimate + H2O. It catalyses the reaction shikimate + NADP(+) = 3-dehydroshikimate + NADPH + H(+). The enzyme catalyses shikimate + ATP = 3-phosphoshikimate + ADP + H(+). It carries out the reaction 3-phosphoshikimate + phosphoenolpyruvate = 5-O-(1-carboxyvinyl)-3-phosphoshikimate + phosphate. The protein operates within metabolic intermediate biosynthesis; chorismate biosynthesis; chorismate from D-erythrose 4-phosphate and phosphoenolpyruvate: step 2/7. It functions in the pathway metabolic intermediate biosynthesis; chorismate biosynthesis; chorismate from D-erythrose 4-phosphate and phosphoenolpyruvate: step 3/7. Its pathway is metabolic intermediate biosynthesis; chorismate biosynthesis; chorismate from D-erythrose 4-phosphate and phosphoenolpyruvate: step 4/7. It participates in metabolic intermediate biosynthesis; chorismate biosynthesis; chorismate from D-erythrose 4-phosphate and phosphoenolpyruvate: step 5/7. The protein operates within metabolic intermediate biosynthesis; chorismate biosynthesis; chorismate from D-erythrose 4-phosphate and phosphoenolpyruvate: step 6/7. Functionally, the AROM polypeptide catalyzes 5 consecutive enzymatic reactions in prechorismate polyaromatic amino acid biosynthesis. This Pyricularia oryzae (strain 70-15 / ATCC MYA-4617 / FGSC 8958) (Rice blast fungus) protein is Pentafunctional AROM polypeptide.